The following is a 156-amino-acid chain: Small ribosomal subunit protein uS7 (156 aa).

It belongs to the universal ribosomal protein uS7 family. As to quaternary structure, part of the 30S ribosomal subunit. Contacts proteins S9 and S11.

Its function is as follows. One of the primary rRNA binding proteins, it binds directly to 16S rRNA where it nucleates assembly of the head domain of the 30S subunit. Is located at the subunit interface close to the decoding center, probably blocks exit of the E-site tRNA. The chain is Small ribosomal subunit protein uS7 from Streptomyces avermitilis (strain ATCC 31267 / DSM 46492 / JCM 5070 / NBRC 14893 / NCIMB 12804 / NRRL 8165 / MA-4680).